The following is a 37-amino-acid chain: Large ribosomal subunit protein bL36 (37 aa).

Belongs to the bacterial ribosomal protein bL36 family.

In Chromohalobacter salexigens (strain ATCC BAA-138 / DSM 3043 / CIP 106854 / NCIMB 13768 / 1H11), this protein is Large ribosomal subunit protein bL36.